We begin with the raw amino-acid sequence, 270 residues long: Putative pyruvate, phosphate dikinase regulatory protein (270 aa).

Glycine 148–threonine 155 serves as a coordination point for ADP.

The protein belongs to the pyruvate, phosphate/water dikinase regulatory protein family. PDRP subfamily.

The enzyme catalyses N(tele)-phospho-L-histidyl/L-threonyl-[pyruvate, phosphate dikinase] + ADP = N(tele)-phospho-L-histidyl/O-phospho-L-threonyl-[pyruvate, phosphate dikinase] + AMP + H(+). The catalysed reaction is N(tele)-phospho-L-histidyl/O-phospho-L-threonyl-[pyruvate, phosphate dikinase] + phosphate + H(+) = N(tele)-phospho-L-histidyl/L-threonyl-[pyruvate, phosphate dikinase] + diphosphate. Bifunctional serine/threonine kinase and phosphorylase involved in the regulation of the pyruvate, phosphate dikinase (PPDK) by catalyzing its phosphorylation/dephosphorylation. The protein is Putative pyruvate, phosphate dikinase regulatory protein of Bacillus cereus (strain AH187).